The primary structure comprises 397 residues: L-cysteine desulfidase (397 aa).

Catalysis depends on cysteine 23, which acts as the Proton acceptor. Positions 288, 330, and 337 each coordinate [4Fe-4S] cluster.

Belongs to the L-cysteine desulfidase family. In terms of assembly, homotrimer. It depends on [4Fe-4S] cluster as a cofactor.

It carries out the reaction L-cysteine + H2O = hydrogen sulfide + pyruvate + NH4(+) + H(+). In terms of biological role, catalyzes the cleavage of L-cysteine to form 2-aminoprop-2-enoate and sulfide. The former then spontaneously hydrolyzes to pyruvate and NH(3). May be responsible for the production of sulfide required for the biosynthesis of iron-sulfur centers in this archaea. In Methanococcus maripaludis (strain C5 / ATCC BAA-1333), this protein is L-cysteine desulfidase.